The primary structure comprises 135 residues: MKPDWPRRGAAGTRVRSRGEGDGTYFARRGAGRRRREIKAPIRAAWSPPSAAMSGLQSGRRWRPQGTGTGARAAGALAALRLGPRLRAAPLLAPLWLLAPTPDSHMTPAPLALRASRGWRENNLSDYQYSWMQKC.

The tract at residues Met1–Gly70 is disordered.

This is an uncharacterized protein from Homo sapiens (Human).